Here is a 277-residue protein sequence, read N- to C-terminus: S-formylglutathione hydrolase FrmB (277 aa).

Residues Ser145, Asp221, and His254 each act as charge relay system in the active site.

Belongs to the esterase D family.

It carries out the reaction S-formylglutathione + H2O = formate + glutathione + H(+). Functionally, serine hydrolase involved in the detoxification of formaldehyde. Hydrolyzes S-formylglutathione to glutathione and formate. This Escherichia coli O9:H4 (strain HS) protein is S-formylglutathione hydrolase FrmB (frmB).